Here is a 276-residue protein sequence, read N- to C-terminus: Phosphatidylglycerol--prolipoprotein diacylglyceryl transferase (276 aa).

7 helical membrane-spanning segments follow: residues 17–37 (LAIRWYGLMYLAGFIMFLWFG), 59–79 (MLFFGVMGVILGGRLGYVLFY), 95–115 (WEGGMAFHGGFLGVLVAMWLF), 129–149 (FIAPMIPCGLAAGRIGNFING), 176–196 (SQLYQFAGEGVALFIILWLFA), 202–222 (MGAVSGVFLIGYGGFRFAAEF), and 237–257 (LSMGQWLSLPMILIGIAMVVW). Arginine 142 lines the a 1,2-diacyl-sn-glycero-3-phospho-(1'-sn-glycerol) pocket.

It belongs to the Lgt family.

It is found in the cell inner membrane. The catalysed reaction is L-cysteinyl-[prolipoprotein] + a 1,2-diacyl-sn-glycero-3-phospho-(1'-sn-glycerol) = an S-1,2-diacyl-sn-glyceryl-L-cysteinyl-[prolipoprotein] + sn-glycerol 1-phosphate + H(+). The protein operates within protein modification; lipoprotein biosynthesis (diacylglyceryl transfer). In terms of biological role, catalyzes the transfer of the diacylglyceryl group from phosphatidylglycerol to the sulfhydryl group of the N-terminal cysteine of a prolipoprotein, the first step in the formation of mature lipoproteins. This is Phosphatidylglycerol--prolipoprotein diacylglyceryl transferase from Cupriavidus pinatubonensis (strain JMP 134 / LMG 1197) (Cupriavidus necator (strain JMP 134)).